The sequence spans 339 residues: tRNA-specific 2-thiouridylase MnmA (339 aa).

ATP-binding positions include 8–15 (AMSGGVDS) and Met34. Cys94 serves as the catalytic Nucleophile. Cys94 and Cys188 are joined by a disulfide. Gly118 contributes to the ATP binding site. The interval 136–138 (KDQ) is interaction with tRNA. The active-site Cysteine persulfide intermediate is Cys188. The interval 290–291 (RY) is interaction with tRNA.

Belongs to the MnmA/TRMU family.

The protein resides in the cytoplasm. The catalysed reaction is S-sulfanyl-L-cysteinyl-[protein] + uridine(34) in tRNA + AH2 + ATP = 2-thiouridine(34) in tRNA + L-cysteinyl-[protein] + A + AMP + diphosphate + H(+). Catalyzes the 2-thiolation of uridine at the wobble position (U34) of tRNA, leading to the formation of s(2)U34. The polypeptide is tRNA-specific 2-thiouridylase MnmA (Nitratiruptor sp. (strain SB155-2)).